A 292-amino-acid chain; its full sequence is Nucleophosmin (292 aa).

Residue M1 is modified to N-acetylmethionine. Residues 1-117 (MEDSMDMDMS…PVHISGQHLV (117 aa)) are necessary for interaction with APEX1. Residues 1-185 (MEDSMDMDMS…DDDDFDEEET (185 aa)) form a required for interaction with SENP3 region. Position 4 is a phosphoserine; by PLK1 and PLK2 (S4). Residue S10 is modified to Phosphoserine. K27 participates in a covalent cross-link: Glycyl lysine isopeptide (Lys-Gly) (interchain with G-Cter in SUMO2). K32 carries the post-translational modification N6-acetyllysine; alternate. K32 participates in a covalent cross-link: Glycyl lysine isopeptide (Lys-Gly) (interchain with G-Cter in SUMO1); alternate. A Glycyl lysine isopeptide (Lys-Gly) (interchain with G-Cter in SUMO2); alternate cross-link involves residue K32. Residue S43 is modified to Phosphoserine. Y67 carries the phosphotyrosine modification. A Phosphoserine modification is found at S70. 2 positions are modified to phosphothreonine: T75 and T95. Residues S125 and S139 each carry the phosphoserine modification. Residues 138-248 (MSGKRSAPGG…PSSVEDIKAK (111 aa)) are disordered. A Glycyl lysine isopeptide (Lys-Gly) (interchain with G-Cter in SUMO2) cross-link involves residue K141. K150 is modified (N6-acetyllysine; alternate). A Glycyl lysine isopeptide (Lys-Gly) (interchain with G-Cter in SUMO2); alternate cross-link involves residue K150. The short motif at 152-157 (PQKKVK) is the Nuclear localization signal element. K154 carries the post-translational modification N6-acetyllysine. Positions 159-186 (DEDDEDDDEDDEDDEDDDDDDFDEEETE) are enriched in acidic residues. The tract at residues 186-214 (EEKVPVKKSVRDTPAKNAQKSNQNGKDLK) is interaction with NOP2. The span at 187-199 (EKVPVKKSVRDTP) shows a compositional bias: basic and acidic residues. Positions 190-196 (PVKKSVR) match the Nuclear localization signal motif. T198 bears the Phosphothreonine; by CDK1 and CDK2 mark. A compositionally biased stretch (polar residues) spans 201 to 210 (KNAQKSNQNG). S206 carries the post-translational modification ADP-ribosylserine. The residue at position 211 (K211) is an N6-acetyllysine. Residue K214 forms a Glycyl lysine isopeptide (Lys-Gly) (interchain with G-Cter in SUMO2) linkage. T217 bears the Phosphothreonine; by CDK1 mark. Over residues 221–233 (KGQESFKKQEKTP) the composition is skewed to basic and acidic residues. Phosphoserine is present on S225. K227 carries the N6-acetyllysine modification. K228 carries the post-translational modification N6-acetyllysine; alternate. Residue K228 forms a Glycyl lysine isopeptide (Lys-Gly) (interchain with G-Cter in SUMO); alternate linkage. Phosphothreonine; by CDK1 occurs at positions 232 and 235. Phosphoserine occurs at positions 240 and 241. Residues 241–292 (SVEDIKAKMQASIEKGGSLPKVEAKFINYVKNCFRMTDQEAIQDLWQWRKSL) are required for nucleolar localization. K246 is covalently cross-linked (Glycyl lysine isopeptide (Lys-Gly) (interchain with G-Cter in SUMO1); alternate). Residues K246 and K248 each participate in a glycyl lysine isopeptide (Lys-Gly) (interchain with G-Cter in SUMO2); alternate cross-link. K248 carries the N6-acetyllysine; alternate modification. Position 252 is a phosphoserine (S252). Residue K255 is modified to N6-acetyllysine; alternate. Residue K255 forms a Glycyl lysine isopeptide (Lys-Gly) (interchain with G-Cter in SUMO1); alternate linkage. K255 participates in a covalent cross-link: Glycyl lysine isopeptide (Lys-Gly) (interchain with G-Cter in SUMO2); alternate. S258 carries the phosphoserine modification. Glycyl lysine isopeptide (Lys-Gly) (interchain with G-Cter in SUMO2); alternate cross-links involve residues K261, K265, and K271. K261 is covalently cross-linked (Glycyl lysine isopeptide (Lys-Gly) (interchain with G-Cter in SUMO); alternate). N6-acetyllysine; alternate occurs at positions 265 and 271. K265 participates in a covalent cross-link: Glycyl lysine isopeptide (Lys-Gly) (interchain with G-Cter in SUMO1); alternate. K265 is modified (N6-succinyllysine; alternate). At T277 the chain carries Phosphothreonine. N6-acetyllysine is present on K290.

The protein belongs to the nucleoplasmin family. As to quaternary structure, decamer formed by two pentameric rings associated in a head-to-head fashion. Disulfide-linked dimers under certain conditions. Interacts with NSUN2 and SENP3. The SWAP complex consists of NPM1, NCL, PARP1 and SWAP70. Interacts with the methylated form of RPS10. Interacts (via N-terminal domain) with APEX1; the interaction is RNA-dependent and decreases peroxide-damaged cells. Interacts with NEK2. Interacts with ROCK2 and BRCA2. Interacts with RPGR. Interacts with CENPW. Interacts with EIF2AK2/PKR. Interacts with DDX31; this interaction prevents interaction between NPM1 and HDM2. Interacts with MYC; competitive with NOP53. Interacts with NOP53; the interaction is direct and competitive with MYC. Interacts with LRRC34. Interacts with RRP1B. Interacts with NPM3. Interacts with ALKBH2. Interacts with TTF1 (via C-terminal region). Interacts with NOP2. Interacts with ARID3C (via REKLES DOMAIN); the interaction mediates ARID3C nuclear shuttling. Post-translationally, acetylated at C-terminal lysine residues, thereby increasing affinity to histones. In terms of processing, ADP-ribosylated. Phosphorylated at Ser-4 by PLK1 and PLK2. Phosphorylation at Ser-4 by PLK2 in S phase is required for centriole duplication and is sufficient to trigger centriole replication. Phosphorylation at Ser-4 by PLK1 takes place during mitosis. Phosphorylated by CDK2 at Ser-125 and Thr-198. Phosphorylation at Thr-198 may trigger initiation of centrosome duplication. Phosphorylated by CDK1 at Thr-198, Thr-217, Thr-232 and Thr-235 during cell mitosis. When these four sites are phosphorated, RNA-binding activity seem to be abolished. May be phosphorylated at Ser-70 by NEK2. The Thr-198 phosphorylated form has higher affinity for ROCK2. Post-translationally, sumoylated by ARF. In terms of processing, ubiquitinated. Ubiquitination leads to proteasomal degradation. Deubiquitinated by USP36. Expressed in B-cells that have been induced to switch to various Ig isotypes.

It is found in the nucleus. Its subcellular location is the nucleolus. The protein localises to the nucleoplasm. It localises to the cytoplasm. The protein resides in the cytoskeleton. It is found in the microtubule organizing center. Its subcellular location is the centrosome. In terms of biological role, involved in diverse cellular processes such as ribosome biogenesis, centrosome duplication, protein chaperoning, histone assembly, cell proliferation, and regulation of tumor suppressors p53/TP53 and ARF. Binds ribosome presumably to drive ribosome nuclear export. Associated with nucleolar ribonucleoprotein structures and bind single-stranded nucleic acids. Acts as a chaperonin for the core histones H3, H2B and H4. Stimulates APEX1 endonuclease activity on apurinic/apyrimidinic (AP) double-stranded DNA but inhibits APEX1 endonuclease activity on AP single-stranded RNA. May exert a control of APEX1 endonuclease activity within nucleoli devoted to repair AP on rDNA and the removal of oxidized rRNA molecules. In concert with BRCA2, regulates centrosome duplication. Regulates centriole duplication: phosphorylation by PLK2 is able to trigger centriole replication. Negatively regulates the activation of EIF2AK2/PKR and suppresses apoptosis through inhibition of EIF2AK2/PKR autophosphorylation. Antagonizes the inhibitory effect of ATF5 on cell proliferation and relieves ATF5-induced G2/M blockade. In complex with MYC enhances the transcription of MYC target genes. May act as chaperonin or cotransporter in the nucleolar localization of transcription termination factor TTF1. The chain is Nucleophosmin (Npm1) from Mus musculus (Mouse).